The chain runs to 208 residues: Nitrate/nitrite response regulator protein homolog (208 aa).

Residues 6–122 enclose the Response regulatory domain; the sequence is KVLLIDDHPL…TLLEQIKRIA (117 aa). Asp-57 carries the post-translational modification 4-aspartylphosphate. Positions 142 to 207 constitute an HTH luxR-type domain; that stretch reads EDNPLDSLTD…AATVLFFEQN (66 aa). The H-T-H motif DNA-binding region spans 166–185; it reads NKQIAAQLFISEETVKVHIR.

Functionally, could activate the expression of a formate dehydrogenase operon and could repress the transcription of the fumarate reductase (frdABCD) operon. This is Nitrate/nitrite response regulator protein homolog (narP) from Haemophilus influenzae (strain ATCC 51907 / DSM 11121 / KW20 / Rd).